Reading from the N-terminus, the 316-residue chain is MRILLANPRGFCAGVDRAISIVERALEIYGAPIYVRHEVVHNRYVVDTLRQRGAIFIEQITEVPDGSILIFSAHGVSQAVRAEARSRDLTVFDATCPLVTKVHMEVARASRKGTEAILIGHTGHPEVEGTMGQYNNPAGGMYLVESPEDVWQLEVKNVDNLCFMTQTTLSVDDTSDVIDALRARFPAIIGPRKDDICYATTNRQEAVRSLAADADVVLVVGSKNSSNSNRLSELAQRVGKPAYLIDSAGDIQESWLQGTQTIGVTAGASAPDILVQQVIERLRLLGAEGAKELIGREENIVFEVPKELRLEVKTVE.

A [4Fe-4S] cluster-binding site is contributed by Cys12. Residues His41 and His74 each coordinate (2E)-4-hydroxy-3-methylbut-2-enyl diphosphate. Dimethylallyl diphosphate is bound by residues His41 and His74. Residues His41 and His74 each contribute to the isopentenyl diphosphate site. Cys96 is a [4Fe-4S] cluster binding site. His124 lines the (2E)-4-hydroxy-3-methylbut-2-enyl diphosphate pocket. Position 124 (His124) interacts with dimethylallyl diphosphate. Position 124 (His124) interacts with isopentenyl diphosphate. The Proton donor role is filled by Glu126. A (2E)-4-hydroxy-3-methylbut-2-enyl diphosphate-binding site is contributed by Thr167. Cys197 provides a ligand contact to [4Fe-4S] cluster. (2E)-4-hydroxy-3-methylbut-2-enyl diphosphate contacts are provided by Ser225, Ser226, Asn227, and Ser269. Ser225, Ser226, Asn227, and Ser269 together coordinate dimethylallyl diphosphate. Isopentenyl diphosphate contacts are provided by Ser225, Ser226, Asn227, and Ser269.

Belongs to the IspH family. In terms of assembly, homodimer. The cofactor is [4Fe-4S] cluster.

It carries out the reaction isopentenyl diphosphate + 2 oxidized [2Fe-2S]-[ferredoxin] + H2O = (2E)-4-hydroxy-3-methylbut-2-enyl diphosphate + 2 reduced [2Fe-2S]-[ferredoxin] + 2 H(+). The catalysed reaction is dimethylallyl diphosphate + 2 oxidized [2Fe-2S]-[ferredoxin] + H2O = (2E)-4-hydroxy-3-methylbut-2-enyl diphosphate + 2 reduced [2Fe-2S]-[ferredoxin] + 2 H(+). It functions in the pathway isoprenoid biosynthesis; dimethylallyl diphosphate biosynthesis; dimethylallyl diphosphate from (2E)-4-hydroxy-3-methylbutenyl diphosphate: step 1/1. Its pathway is isoprenoid biosynthesis; isopentenyl diphosphate biosynthesis via DXP pathway; isopentenyl diphosphate from 1-deoxy-D-xylulose 5-phosphate: step 6/6. Catalyzes the conversion of 1-hydroxy-2-methyl-2-(E)-butenyl 4-diphosphate (HMBPP) into a mixture of isopentenyl diphosphate (IPP) and dimethylallyl diphosphate (DMAPP). Acts in the terminal step of the DOXP/MEP pathway for isoprenoid precursor biosynthesis. The protein is 4-hydroxy-3-methylbut-2-enyl diphosphate reductase of Sodalis glossinidius (strain morsitans).